The following is a 280-amino-acid chain: Rhomboid-like protein 11, chloroplastic (280 aa).

The transit peptide at 1–57 (MSQLLHLHRLSLPQSSLRFRFPPLHRRRAASSPTNSTQPPLQFRPLTVSRSQITCRF) directs the protein to the chloroplast. Over 58–82 (SQSDITPQFELDKAKDNRKPQKRAN) the chain is Stromal. Residues 83–103 (GIFWIILINLGIYLADHFFQV) form a helical membrane-spanning segment. The Chloroplast intermembrane portion of the chain corresponds to 104–117 (RGIKSLYLYHNFPA). The chain crosses the membrane as a helical span at residues 118 to 140 (WYQFVTATFCHANWNHLSSNLFF). At 141-154 (LYIFGKLVEEEEGN) the chain is on the stromal side. The helical transmembrane segment at 155–175 (FGLWLSYLFTGVGANLVSWLV) threads the bilayer. Residues 176–178 (LPR) lie on the Chloroplast intermembrane side of the membrane. Residues 179-199 (NAVSVGASGAVFGLFAISVLV) traverse the membrane as a helical segment. S186 functions as the Nucleophile in the catalytic mechanism. Residues 200–243 (KMSWDWRKILEVLILGQFVIERVMEAAQASAGLSGTIYGGYSLQ) are Stromal-facing. Residues 244 to 264 (TVNHIAHLSGALVGVVLVWLL) traverse the membrane as a helical segment. H250 acts as the Charge relay system in catalysis. At 265 to 280 (SKFPSASMDQDVKKSS) the chain is on the chloroplast intermembrane side.

This sequence belongs to the peptidase S54 family. Homooligomer.

The protein localises to the plastid. It localises to the chloroplast inner membrane. In terms of biological role, rhomboid-type serine protease that catalyzes intramembrane proteolysis. May be involved in TIC22 processing during its import. The polypeptide is Rhomboid-like protein 11, chloroplastic (Arabidopsis thaliana (Mouse-ear cress)).